The sequence spans 163 residues: Nucleotide-binding protein PC1_1036 (163 aa).

The protein belongs to the YajQ family.

Functionally, nucleotide-binding protein. This Pectobacterium carotovorum subsp. carotovorum (strain PC1) protein is Nucleotide-binding protein PC1_1036.